We begin with the raw amino-acid sequence, 434 residues long: FAD-dependent monooxygenase cfoG (434 aa).

An N-terminal signal peptide occupies residues 1–22 (MKSSPGLHIIIVGAGITGLATA). Residue glutamate 36 participates in FAD binding. Residues arginine 193 and tyrosine 233 contribute to the active site. Residues aspartate 314 and glycine 327 each contribute to the FAD site.

It belongs to the paxM FAD-dependent monooxygenase family. Monomer. FAD serves as cofactor.

Its pathway is secondary metabolite biosynthesis; flavonoid biosynthesis. Its function is as follows. Monooxygenase; part of the gene cluster that mediates the biosynthesis of chlorflavonin, a fungal flavonoid with acetolactate synthase inhibitory activity. Within the pathway, cfoG is responsible for the hydroxylation of the flavonoid skeleton at position C8. The pathway begins with the PKS-NRPS hybrid synthetase cfoA that uses benzoic acid or p-hydroxybenzoic acid as a starter unit with four rounds of chain elongation using malonyl-CoA to form the chalcone skeleton. Then, a new type of chalcone isomerase, cfoK, catalyzes the conversion of the chalcone into a flavanone by a histidine-mediated oxa-Michael addition mechanism. The desaturation of flavanone to flavone is catalyzed by a new type of flavone synthase, the flavin mononucleotide (FMN)-dependent oxidoreductase cfoJ. Monooxygenases cfoF, cfoG, and P450 cfoH are responsible for the hydroxylation of the flavonoid skeleton at sites C3, C8, and C2', respectively. Like cfoF, the dehydratase cfoI plays also a role in the hydroxylation of position C3. Methyltransferases cfoB, cfoC, and cfoD then catalyze the methylation of C7-OH, C8-OH, and C3-OH, respectively. Finally, the monooxygenase cfoE is responsible for the chlorination of flavonoid at position C3'. This Aspergillus candidus protein is FAD-dependent monooxygenase cfoG.